The chain runs to 202 residues: Dephospho-CoA kinase (202 aa).

Positions 6-202 constitute a DPCK domain; it reads KVSITGDLSS…EYFYALKGAL (197 aa). 14-19 is an ATP binding site; sequence SSGKTE.

The protein belongs to the CoaE family.

It is found in the cytoplasm. The catalysed reaction is 3'-dephospho-CoA + ATP = ADP + CoA + H(+). The protein operates within cofactor biosynthesis; coenzyme A biosynthesis; CoA from (R)-pantothenate: step 5/5. In terms of biological role, catalyzes the phosphorylation of the 3'-hydroxyl group of dephosphocoenzyme A to form coenzyme A. The polypeptide is Dephospho-CoA kinase (Chlamydia caviae (strain ATCC VR-813 / DSM 19441 / 03DC25 / GPIC) (Chlamydophila caviae)).